The sequence spans 395 residues: Subtilisin-like protease 9 (395 aa).

Residues 1-20 (MGFFRTLFSFSIFALSLADT) form the signal peptide. A propeptide spanning residues 21 to 120 (SKFIGLDDVD…ADRVVKMAAL (100 aa)) is cleaved from the precursor. The Inhibitor I9 domain occupies 36–117 (SYIVVMKGAV…YVEADRVVKM (82 aa)). Residues 128–395 (SWGLGRISHK…RRLLYNGSGA (268 aa)) form the Peptidase S8 domain. Active-site charge relay system residues include aspartate 160 and histidine 191. The N-linked (GlcNAc...) asparagine glycan is linked to asparagine 252. Residue serine 341 is the Charge relay system of the active site. The N-linked (GlcNAc...) asparagine glycan is linked to asparagine 391.

It belongs to the peptidase S8 family.

It is found in the secreted. Secreted subtilisin-like serine protease with keratinolytic activity that contributes to pathogenicity. The protein is Subtilisin-like protease 9 (SUB9) of Arthroderma otae (strain ATCC MYA-4605 / CBS 113480) (Microsporum canis).